A 201-amino-acid polypeptide reads, in one-letter code: Alpha-1-acid glycoprotein 1 (201 aa).

The N-terminal stretch at 1 to 18 (MALSWVLTVLSLLPLLEA) is a signal peptide. Position 19 is a pyrrolidone carboxylic acid (glutamine 19). 2 disulfides stabilise this stretch: cysteine 23–cysteine 165 and cysteine 90–cysteine 183. The N-linked (GlcNAc...) (complex) asparagine glycan is linked to asparagine 33. N-linked (GlcNAc...) asparagine glycosylation occurs at asparagine 56. N-linked (GlcNAc...) (complex) asparagine glycosylation occurs at asparagine 72. Asparagine 93 and asparagine 103 each carry an N-linked (GlcNAc...) asparagine glycan.

Belongs to the calycin superfamily. Lipocalin family. N-glycosylated. N-glycan heterogeneity at Asn-33: Hex5HexNAc4 (minor), Hex6HexNAc5 (major) and dHex1Hex6HexNAc5 (minor). In terms of tissue distribution, expressed by the liver and secreted in plasma.

It is found in the secreted. In terms of biological role, functions as a transport protein in the blood stream. Binds various ligands in the interior of its beta-barrel domain. Also binds synthetic drugs and influences their distribution and availability in the body. Appears to function in modulating the activity of the immune system during the acute-phase reaction. This chain is Alpha-1-acid glycoprotein 1 (ORM1), found in Homo sapiens (Human).